The primary structure comprises 345 residues: Histidinol-phosphate aminotransferase (345 aa).

An N6-(pyridoxal phosphate)lysine modification is found at Lys-205.

It belongs to the class-II pyridoxal-phosphate-dependent aminotransferase family. Histidinol-phosphate aminotransferase subfamily. As to quaternary structure, homodimer. Pyridoxal 5'-phosphate is required as a cofactor.

It carries out the reaction L-histidinol phosphate + 2-oxoglutarate = 3-(imidazol-4-yl)-2-oxopropyl phosphate + L-glutamate. The protein operates within amino-acid biosynthesis; L-histidine biosynthesis; L-histidine from 5-phospho-alpha-D-ribose 1-diphosphate: step 7/9. The sequence is that of Histidinol-phosphate aminotransferase from Parabacteroides distasonis (strain ATCC 8503 / DSM 20701 / CIP 104284 / JCM 5825 / NCTC 11152).